The following is a 474-amino-acid chain: Probable diacyglycerol O-acyltransferase Tgs4 (474 aa).

Histidine 135 functions as the Proton acceptor in the catalytic mechanism.

This sequence belongs to the long-chain O-acyltransferase family.

The catalysed reaction is an acyl-CoA + a 1,2-diacyl-sn-glycerol = a triacyl-sn-glycerol + CoA. It functions in the pathway glycerolipid metabolism; triacylglycerol biosynthesis. Its function is as follows. Required for maintaining the appropriate mycolic acid composition and permeability of the envelope on its exposure to acidic pH. This is Probable diacyglycerol O-acyltransferase Tgs4 (tgs4) from Mycobacterium tuberculosis (strain CDC 1551 / Oshkosh).